Reading from the N-terminus, the 64-residue chain is Large ribosomal subunit protein bL35 (64 aa).

A disordered region spans residues 1–41 (MPKMKSHSGASKRFKVSGKGKLLRQQANRRHLLEHKPSRRT).

This sequence belongs to the bacterial ribosomal protein bL35 family.

In Nocardia farcinica (strain IFM 10152), this protein is Large ribosomal subunit protein bL35.